We begin with the raw amino-acid sequence, 457 residues long: Subtilisin-like serine protease Pen c 2 (457 aa).

Positions 1–16 (MKGFLGLALLPLLTAA) are cleaved as a signal peptide. Residues 17–136 (SPVSVESIHN…IEKDSEVHHF (120 aa)) constitute a propeptide, removed in mature form. The Inhibitor I9 domain maps to 43–134 (SYIVVFKKHV…DYIEKDSEVH (92 aa)). Positions 146-457 (PWGLARISHR…YTDIVAQGGY (312 aa)) constitute a Peptidase S8 domain. Catalysis depends on charge relay system residues Asp182 and His214. N-linked (GlcNAc...) asparagine glycans are attached at residues Asn244 and Asn284. Ser380 (charge relay system) is an active-site residue. The N-linked (GlcNAc...) asparagine glycan is linked to Asn447.

The protein belongs to the peptidase S8 family.

In terms of biological role, serine protease. The sequence is that of Subtilisin-like serine protease Pen c 2 from Penicillium citrinum.